The chain runs to 2014 residues: Leucine-rich repeat serine/threonine-protein kinase 1 (2014 aa).

ANK repeat units lie at residues 51–81 (QCPSMEEIHTAYKQRNLSRARDLLRGVCEES), 86–116 (EKGQLLSIAAAHGDLETVQFLLTEKRVELPT), 119–148 (TDDNPAVVAAHFGHAEVVRELLESLPGPCT), 152–182 (LLNWMLALACQRGHLEVVKLLVLTHGADPEN), and 193–222 (IVRLPLYAAIKAGNEDIAIFLLRHGAYFCS). LRR repeat units lie at residues 279–300 (QITELDLSANCLPSLPSIIPWG), 303–324 (NLKKLNLSNNQLGELPCVQSSD), 330–351 (RLLEIDISSNKLSHLPPGFLHL), 353–374 (KLQKLTASKNYLERLFEEENAT), 381–402 (KLQELDLADNRLTELPVQFMHS), 405–426 (SLTSLNVSRNNLKSFPDPWSCP), 427–447 (LKCCKASKNALESLPDKMAVF), 451–472 (HLRDADFSENSLKEVPLGLFQL), 474–495 (ALMFLRLQGNQLLSLPPQEKWT), 498–519 (QLKTLDLSRNQLGKNEDGLKTK), 549–570 (SLEVLCLNDNHLDAVPPSVCLL), 572–594 (NLSELYLGNNPGLRELPPELGQL), and 596–617 (NLWQLDIEDLNISNVPAEVRKE). The region spanning 632-826 (KAEKCKLMKM…QLIFHVTCNM (195 aa)) is the Roc domain. GDP contacts are provided by P647, R648, G650, K651, S652, T653, E670, H758, D760, C806, and K807. The 398-residue stretch at 840 to 1237 (GRLIPRSYIS…PARLFLENSK (398 aa)) folds into the COR domain. The residue at position 1061 (T1061) is a Phosphothreonine. Residues S1064 and S1074 each carry the phosphoserine modification. T1075 carries the post-translational modification Phosphothreonine. Positions 1242 to 1525 (EGENSILGQG…VVSQMKDPTF (284 aa)) constitute a Protein kinase domain. Residues 1248-1256 (LGQGGSGTV) and K1270 each bind ATP. D1386 acts as the Proton acceptor in catalysis. WD repeat units lie at residues 1539–1579 (AFFS…RMTC), 1582–1622 (MKLS…QALD), 1623–1668 (TPAV…SCSY), 1693–1729 (VKAMEVVNSGSEVWYSNGPGLLVIDCTILDISRRLEP), 1730–1778 (YAAP…YFCG), 1779–1948 (DPNP…AVLK), and 1950–1986 (RELNRHGVLVDAAVVAKDTVVCSFANENTEWCLAVWR). The segment at 1791 to 1906 (PSVLETPGSH…MDGETFSQHL (116 aa)) is WD40 loop; involved in dimer stabilization. Positions 1839-1895 (SMSSYSSSPPHQDPRSPSSLPSSLTSYSSVPFSANYEDSDRLQEPSVTSDRTEHDLS) are disordered. Residues 1853 to 1871 (RSPSSLPSSLTSYSSVPFS) show a composition bias toward low complexity.

Belongs to the protein kinase superfamily. TKL Ser/Thr protein kinase family. ROCO subfamily. Homodimer. The homodimer is autoinhibited and stabilized by its N-terminal residues and ANK repeats. Interacts with CSK. It depends on Mg(2+) as a cofactor. Mn(2+) serves as cofactor. Post-translationally, autophosphorylated. Autophosphorylation in inhibited in its dimeric state. Phosphorylated by protein kinase C isozymes PRKCA, PRKCB, PRKCG, PRKCE, PRKCZ and PRKCT at Ser-1064, Ser-1074 and Thr-1075. Phosphorylation at these residues activates the kinase activity of LRRK1 to phosphorylate RAB7A. In terms of tissue distribution, expressed in osteoclasts and bone marrow stromal cells.

The protein localises to the cytoplasm. The protein resides in the cell membrane. The catalysed reaction is L-seryl-[protein] + ATP = O-phospho-L-seryl-[protein] + ADP + H(+). It carries out the reaction L-threonyl-[protein] + ATP = O-phospho-L-threonyl-[protein] + ADP + H(+). With respect to regulation, activated by phosphorylation by PKC. Binds both GTP and GDP; binding of GTP stimulates kinase activity. Sterically autoinhibited in its dimeric state. Functionally, serine/threonine-protein kinase which phosphorylates RAB proteins involved in intracellular trafficking. Phosphorylates RAB7A; this activity is dependent on protein kinase C (PKC) activation. Plays a role in the negative regulation of bone mass, acting through the maturation of osteoclasts. This Mus musculus (Mouse) protein is Leucine-rich repeat serine/threonine-protein kinase 1.